Here is a 1082-residue protein sequence, read N- to C-terminus: Mediator of RNA polymerase II transcription subunit 14 (1082 aa).

Disordered stretches follow at residues 1 to 80 (MTTT…APPP) and 319 to 343 (EATS…NLPL). Threonine 2 is subject to N-acetylthreonine. Serine 7 carries the phosphoserine modification. The segment covering 13–28 (NEERLSNEMHALKNRS) has biased composition (basic and acidic residues). Residues 29–59 (EQNGQEQQGPVKNTQLHGPSATDPETTATQK) are compositionally biased toward polar residues. Over residues 321–340 (TSTNGDSENNEENSSSNGNN) the composition is skewed to low complexity. At threonine 1036 the chain carries Phosphothreonine.

It belongs to the Mediator complex subunit 14 family. Component of the Mediator complex, which is composed of at least 21 subunits that form three structurally distinct submodules. The Mediator head module contains MED6, MED8, MED11, SRB4/MED17, SRB5/MED18, ROX3/MED19, SRB2/MED20 and SRB6/MED22, the middle module contains MED1, MED4, NUT1/MED5, MED7, CSE2/MED9, NUT2/MED10, SRB7/MED21 and SOH1/MED31, and the tail module contains MED2, PGD1/MED3, RGR1/MED14, GAL11/MED15 and SIN4/MED16. The head and the middle modules interact directly with RNA polymerase II, whereas the elongated tail module interacts with gene-specific regulatory proteins.

It localises to the nucleus. Its function is as follows. Component of the Mediator complex, a coactivator involved in the regulated transcription of nearly all RNA polymerase II-dependent genes. Mediator functions as a bridge to convey information from gene-specific regulatory proteins to the basal RNA polymerase II transcription machinery. The Mediator complex, having a compact conformation in its free form, is recruited to promoters by direct interactions with regulatory proteins and serves for the assembly of a functional preinitiation complex with RNA polymerase II and the general transcription factors. The Mediator complex unfolds to an extended conformation and partially surrounds RNA polymerase II, specifically interacting with the unphosphorylated form of the C-terminal domain (CTD) of RNA polymerase II. The Mediator complex dissociates from the RNA polymerase II holoenzyme and stays at the promoter when transcriptional elongation begins. The sequence is that of Mediator of RNA polymerase II transcription subunit 14 (RGR1) from Saccharomyces cerevisiae (strain ATCC 204508 / S288c) (Baker's yeast).